The primary structure comprises 64 residues: Large ribosomal subunit protein bL33 (64 aa).

The protein belongs to the bacterial ribosomal protein bL33 family.

The polypeptide is Large ribosomal subunit protein bL33 (Nostoc sp. (strain PCC 7120 / SAG 25.82 / UTEX 2576)).